We begin with the raw amino-acid sequence, 88 residues long: UPF0297 protein SPCG_0205 (88 aa).

Belongs to the UPF0297 family.

This Streptococcus pneumoniae (strain CGSP14) protein is UPF0297 protein SPCG_0205.